The chain runs to 449 residues: MSTSHGYRASWWTNILHQVPHTNFQFEVVDNQFAPQEWPYQQALLFLASIAGLCLAISLILICVYLIRFCCCASQEDDDSKNHRVCCVTWSCVAAVIICCAGIGIGFYGNSETNDGVYQVTYSLMNTNHTLTSINLLVSDTVELLSSVVKSDLTQLEEIFSKRTEFLVMIRNTRRQVESVAQQLAEISFWKGTELNPNVLAEQVNFIEDYRWLAYILLLLLDLIICLFTLLGLAKRIKWLVIVMTVVSFFVLLLSWGSMGLEMATAVGLSDFCSNPDGYVMNQTQMITNINPDILQYYISCNQDVANPFRQRLTTSQRALSNIHSQLHGLEREAVPQFPTAEKNLLAVQGMLNTTEGNFHHLVALLNCRGLHKDYVDALKGLCYDGMEGILFLLLFSFLSALSFTAAVCSLPRAWKRFQNRDLDYDDMDEDDPFNPQESKRFVQWQSSI.

At 1–43 (MSTSHGYRASWWTNILHQVPHTNFQFEVVDNQFAPQEWPYQQA) the chain is on the extracellular side. The helical transmembrane segment at 44-64 (LLFLASIAGLCLAISLILICV) threads the bilayer. Over 65 to 86 (YLIRFCCCASQEDDDSKNHRVC) the chain is Cytoplasmic. Residues 87–107 (CVTWSCVAAVIICCAGIGIGF) form a helical membrane-spanning segment. Residues 108–212 (YGNSETNDGV…QVNFIEDYRW (105 aa)) lie on the Extracellular side of the membrane. The N-linked (GlcNAc...) asparagine glycan is linked to Asn-128. Residues 213-233 (LAYILLLLLDLIICLFTLLGL) traverse the membrane as a helical segment. Topologically, residues 234–238 (AKRIK) are cytoplasmic. The helical transmembrane segment at 239 to 259 (WLVIVMTVVSFFVLLLSWGSM) threads the bilayer. The Extracellular segment spans residues 260 to 388 (GLEMATAVGL…LKGLCYDGME (129 aa)). Cystine bridges form between Cys-273–Cys-383 and Cys-301–Cys-368. Residues Asn-282 and Asn-353 are each glycosylated (N-linked (GlcNAc...) asparagine). The helical transmembrane segment at 389-409 (GILFLLLFSFLSALSFTAAVC) threads the bilayer. Residues 410–449 (SLPRAWKRFQNRDLDYDDMDEDDPFNPQESKRFVQWQSSI) lie on the Cytoplasmic side of the membrane.

It belongs to the tweety family. In terms of assembly, homotetramer; disulfide-linked. Homodimer.

The protein resides in the cell membrane. The enzyme catalyses chloride(in) = chloride(out). The catalysed reaction is L-glutamate(out) = L-glutamate(in). Its function is as follows. May act as a calcium-independent, swelling-dependent volume-regulated anion channel (VRAC-swell) which plays a pivotal role in the process of regulatory volume decrease (RVD) in the brain through the efflux of anions like chloride and organic osmolytes like glutamate. The protein is Protein tweety homolog 1-A (ttyh1-a) of Xenopus laevis (African clawed frog).